Reading from the N-terminus, the 261-residue chain is Aromatic peroxygenase (261 aa).

Cys-36 serves as a coordination point for heme. 4 N-linked (GlcNAc...) asparagine glycosylation sites follow: Asn-100, Asn-137, Asn-141, and Asn-220.

The protein belongs to the chloroperoxidase family. It depends on heme b as a cofactor. N-glycosylated.

Functionally, aromatic peroxidase that oxidizes aryl alcohols into the corresponding aldehydes and then into the corresponding benzoic acids. Catalyzes the regioselective peroxide-dependent hydroxylation of naphthalene to 1-naphthol and to a far lesser extent 2-naphthol via a naphthalene 1,2-oxide intermediate. Halogenates phenol to 2-bromophenol and 4-bromophenol. Oxidizes the sulfur-containing heterocycle dibenzothiophene to yield sulfoxidation products, and trace amounts of ring-hydroxylation products. This is Aromatic peroxygenase from Coprinellus radians (Coprophilous mushroom).